A 156-amino-acid chain; its full sequence is Small ribosomal subunit protein uS7c (156 aa).

This sequence belongs to the universal ribosomal protein uS7 family. As to quaternary structure, part of the 30S ribosomal subunit.

Its subcellular location is the plastid. The protein resides in the chloroplast. Its function is as follows. One of the primary rRNA binding proteins, it binds directly to 16S rRNA where it nucleates assembly of the head domain of the 30S subunit. The polypeptide is Small ribosomal subunit protein uS7c (rps7) (Rhodomonas salina (Cryptomonas salina)).